A 168-amino-acid polypeptide reads, in one-letter code: MAILNILEFPDSRLRTLAKPVAMVDDGIRQLVDDMFETMYEAPGIGLAATQVNVHKRVVVMDLSEDRSAPMVFINPEIEKLTDEMDQYQEGCLSVPGFYENVDRPQKVRVKALDRDGKPYELVAEGLLAICIQHECDHLNGKLFVDYLSNLKRDRIKKKLEKQHKLNA.

C92 and H134 together coordinate Fe cation. Residue E135 is part of the active site. Fe cation is bound at residue H138.

The protein belongs to the polypeptide deformylase family. Fe(2+) serves as cofactor.

It carries out the reaction N-terminal N-formyl-L-methionyl-[peptide] + H2O = N-terminal L-methionyl-[peptide] + formate. In terms of biological role, removes the formyl group from the N-terminal Met of newly synthesized proteins. Requires at least a dipeptide for an efficient rate of reaction. N-terminal L-methionine is a prerequisite for activity but the enzyme has broad specificity at other positions. This chain is Peptide deformylase 1, found in Pseudomonas syringae pv. tomato (strain ATCC BAA-871 / DC3000).